The following is a 246-amino-acid chain: 3-deoxy-manno-octulosonate cytidylyltransferase (246 aa).

The protein belongs to the KdsB family.

The protein resides in the cytoplasm. It carries out the reaction 3-deoxy-alpha-D-manno-oct-2-ulosonate + CTP = CMP-3-deoxy-beta-D-manno-octulosonate + diphosphate. It participates in nucleotide-sugar biosynthesis; CMP-3-deoxy-D-manno-octulosonate biosynthesis; CMP-3-deoxy-D-manno-octulosonate from 3-deoxy-D-manno-octulosonate and CTP: step 1/1. Its pathway is bacterial outer membrane biogenesis; lipopolysaccharide biosynthesis. Activates KDO (a required 8-carbon sugar) for incorporation into bacterial lipopolysaccharide in Gram-negative bacteria. The sequence is that of 3-deoxy-manno-octulosonate cytidylyltransferase from Leptospira biflexa serovar Patoc (strain Patoc 1 / Ames).